Reading from the N-terminus, the 472-residue chain is 3-isopropylmalate dehydratase large subunit (472 aa).

Residues Cys-346, Cys-406, and Cys-409 each coordinate [4Fe-4S] cluster.

It belongs to the aconitase/IPM isomerase family. LeuC type 1 subfamily. As to quaternary structure, heterodimer of LeuC and LeuD. It depends on [4Fe-4S] cluster as a cofactor.

It catalyses the reaction (2R,3S)-3-isopropylmalate = (2S)-2-isopropylmalate. It participates in amino-acid biosynthesis; L-leucine biosynthesis; L-leucine from 3-methyl-2-oxobutanoate: step 2/4. Its function is as follows. Catalyzes the isomerization between 2-isopropylmalate and 3-isopropylmalate, via the formation of 2-isopropylmaleate. The sequence is that of 3-isopropylmalate dehydratase large subunit from Thermus thermophilus (strain ATCC BAA-163 / DSM 7039 / HB27).